The chain runs to 540 residues: Phosphatidylinositol 4-phosphate 5-kinase type-1 beta (540 aa).

A disordered region spans residues 1–21 (MSSAAENGEAAPGKQNEEKTY). The PIPK domain maps to 25-395 (ASSAIKGAIQ…RFLKFMNSRV (371 aa)). Phosphoserine occurs at positions 445, 447, and 448.

In terms of assembly, interacts with RAC1, AJUBA, PLD1, PLD2 and ARF1. As to expression, detected in heart, pancreas, brain, kidney, skeletal muscle and lung.

It localises to the cytoplasm. It is found in the cytosol. The protein resides in the cell membrane. The protein localises to the endomembrane system. It carries out the reaction a 1,2-diacyl-sn-glycero-3-phospho-(1D-myo-inositol 4-phosphate) + ATP = a 1,2-diacyl-sn-glycero-3-phospho-(1D-myo-inositol-4,5-bisphosphate) + ADP + H(+). The catalysed reaction is 1-octadecanoyl-2-(5Z,8Z,11Z,14Z)-eicosatetraenoyl-sn-glycero-3-phospho-1D-myo-inositol 4-phosphate + ATP = 1-octadecanoyl-2-(5Z,8Z,11Z,14Z)-eicosatetraenoyl-sn-glycero-3-phospho-1D-myo-inositol 4,5-bisphosphate + ADP + H(+). It catalyses the reaction 1-octadecanoyl-2-(9Z)-octadecenoyl-sn-glycero-3-phospho-1D-myo-inositol 4-phosphate + ATP = 1-octadecanoyl-2-(9Z)-octadecenoyl-sn-glycero-3-phospho-1D-myo-inositol 4,5-bisphosphate + ADP + H(+). The enzyme catalyses 1-octadecanoyl-2-(9Z)-octadecenoyl-sn-glycero-3-phospho-1D-myo-inositol + ATP = 1-octadecanoyl-2-(9Z)-octadecenoyl-sn-glycero-3-phospho-1D-myo-inositol 5-phosphate + ADP + H(+). It carries out the reaction 1-octadecanoyl-2-(9Z,12Z)-octadecadienoyl-sn-glycero-3-phospho-1D-myo-inositol + ATP = 1-octadecanoyl-2-(9Z,12Z)-octadecadienoyl-sn-glycero-3-phospho-1D-myo-inositol 5-phosphate + ADP + H(+). The catalysed reaction is 1-octadecanoyl-2-(5Z,8Z,11Z,14Z-eicosatetraenoyl)-sn-glycero-3-phospho-(1D-myo-inositol) + ATP = 1-octadecanoyl-2-(5Z,8Z,11Z,14Z)-eicosatetraenoyl-sn-glycero-3-phospho-1D-myo-inositol 5-phosphate + ADP + H(+). It catalyses the reaction 1,2-di-(9Z,12Z)-octadecadienoyl-sn-glycero-3-phospho-1D-myo-inositol + ATP = 1,2-di(9Z,12Z)-octadecadienoyl-sn-glycero-3-phospho-1D-myo-inositol 5-phosphate + ADP + H(+). Functionally, catalyzes the phosphorylation of phosphatidylinositol 4-phosphate (PtdIns(4)P/PI4P) to form phosphatidylinositol 4,5-bisphosphate (PtdIns(4,5)P2/PIP2), a lipid second messenger that regulates several cellular processes such as signal transduction, vesicle trafficking, actin cytoskeleton dynamics, cell adhesion, and cell motility. PtdIns(4,5)P2 can directly act as a second messenger or can be utilized as a precursor to generate other second messengers: inositol 1,4,5-trisphosphate (IP3), diacylglycerol (DAG) or phosphatidylinositol-3,4,5-trisphosphate (PtdIns(3,4,5)P3/PIP3). Mediates RAC1-dependent reorganization of actin filaments. Contributes to the activation of phospholipase PLD2. Together with PIP5K1A, is required, after stimulation by G-protein coupled receptors, for the synthesis of IP3 that will induce stable platelet adhesion. The sequence is that of Phosphatidylinositol 4-phosphate 5-kinase type-1 beta from Homo sapiens (Human).